The following is an 82-amino-acid chain: DNA-directed RNA polymerase subunit Rpo5 (82 aa).

This sequence belongs to the archaeal Rpo5/eukaryotic RPB5 RNA polymerase subunit family. In terms of assembly, part of the RNA polymerase complex.

It is found in the cytoplasm. The catalysed reaction is RNA(n) + a ribonucleoside 5'-triphosphate = RNA(n+1) + diphosphate. Functionally, DNA-dependent RNA polymerase (RNAP) catalyzes the transcription of DNA into RNA using the four ribonucleoside triphosphates as substrates. The chain is DNA-directed RNA polymerase subunit Rpo5 from Thermococcus celer.